Consider the following 682-residue polypeptide: Glutamine--fructose-6-phosphate aminotransferase [isomerizing] 2 (682 aa).

The For GATase activity role is filled by Cys-2. One can recognise a Glutamine amidotransferase type-2 domain in the interval 2–288 (CGIFAYMNYR…DDDIAAVADG (287 aa)). Position 244 is a phosphoserine (Ser-244). SIS domains lie at 360-499 (HLKE…DRIS) and 531-672 (LALE…VDFP). Substrate-binding positions include 377-378 (TS), 422-424 (SQS), Thr-427, and His-578.

In terms of tissue distribution, highest levels of expression in heart, placenta, and spinal cord.

It carries out the reaction D-fructose 6-phosphate + L-glutamine = D-glucosamine 6-phosphate + L-glutamate. It functions in the pathway nucleotide-sugar biosynthesis; UDP-N-acetyl-alpha-D-glucosamine biosynthesis; alpha-D-glucosamine 6-phosphate from D-fructose 6-phosphate: step 1/1. Its function is as follows. Controls the flux of glucose into the hexosamine pathway. Most likely involved in regulating the availability of precursors for N- and O-linked glycosylation of proteins. In Homo sapiens (Human), this protein is Glutamine--fructose-6-phosphate aminotransferase [isomerizing] 2 (GFPT2).